Consider the following 381-residue polypeptide: MIKFGEAVLGNEIKAIVNVALGKGELIENTFTNALTRGNCVFANLRPNLIVKPLTLVVPRHNIESEIQDELFQGVIQYAVAKAVADLDLDEDLKVVVSVNVPEVPITNLNKRKLFQYFYASAKLAINRALNEYPSKEKVKKEKYRALHPLVGFRDVRLEYPPYLQIALDVPTMENLEFLLQTIPNSDHIILEAGTPLIKKFGLEVIEIMREYFDGFIVADLKTLDTGRVEVRLAFEATANAVAISGVAPKSTIIKAIHECQKCGLISYLDMMNVSEPQKLYDSLKLKPDVVILHRGIDEETFGIKKEWKFKENCLLAIAGGVGVENVEELLKEYQILIVGRAITKSKDPGRVIRMFINKMGYDIDTYRLYFDEDEDIGEEL.

The formaldehyde-activating enzyme stretch occupies residues M1 to L150. The 3-hexulose-6-phosphate synthase stretch occupies residues V151–L381.

In the N-terminal section; belongs to the formaldehyde-activating enzyme family. The protein in the C-terminal section; belongs to the HPS/KGPDC family. HPS subfamily.

It catalyses the reaction 5,6,7,8-tetrahydromethanopterin + formaldehyde = 5,10-methylenetetrahydromethanopterin + H2O. It carries out the reaction D-ribulose 5-phosphate + formaldehyde = D-arabino-hex-3-ulose 6-phosphate. It participates in carbohydrate biosynthesis; D-ribose 5-phosphate biosynthesis. Catalyzes the condensation of formaldehyde with tetrahydromethanopterin (H(4)MPT) to 5,10-methylenetetrahydromethanopterin. Functionally, catalyzes the reversible formation of ribulose-5-phosphate and formaldehyde from 3-hexulose-6-phosphate. The chain is Bifunctional enzyme Fae/Hps from Methanocaldococcus jannaschii (strain ATCC 43067 / DSM 2661 / JAL-1 / JCM 10045 / NBRC 100440) (Methanococcus jannaschii).